Reading from the N-terminus, the 228-residue chain is Methylthioribulose-1-phosphate dehydratase (228 aa).

C92 is a binding site for substrate. Zn(2+) is bound by residues H110 and H112. E135 functions as the Proton donor/acceptor in the catalytic mechanism. H192 serves as a coordination point for Zn(2+).

Belongs to the aldolase class II family. MtnB subfamily. Zn(2+) serves as cofactor.

Its subcellular location is the cytoplasm. The protein localises to the nucleus. It catalyses the reaction 5-(methylsulfanyl)-D-ribulose 1-phosphate = 5-methylsulfanyl-2,3-dioxopentyl phosphate + H2O. It participates in amino-acid biosynthesis; L-methionine biosynthesis via salvage pathway; L-methionine from S-methyl-5-thio-alpha-D-ribose 1-phosphate: step 2/6. In terms of biological role, catalyzes the dehydration of methylthioribulose-1-phosphate (MTRu-1-P) into 2,3-diketo-5-methylthiopentyl-1-phosphate (DK-MTP-1-P). This chain is Methylthioribulose-1-phosphate dehydratase, found in Schizosaccharomyces pombe (strain 972 / ATCC 24843) (Fission yeast).